A 69-amino-acid chain; its full sequence is MELLIPLSLLGLYLFSGTRDSVHKGEVKDDLKEKPIKVNFNLTDSTKVDHKTHLKQYSSLKPGDTLEIL.

The first 21 residues, 1–21 (MELLIPLSLLGLYLFSGTRDS), serve as a signal peptide directing secretion. N-linked (GlcNAc...) asparagine glycosylation occurs at N41.

Its subcellular location is the secreted. This is an uncharacterized protein from Dictyostelium discoideum (Social amoeba).